The following is a 106-amino-acid chain: Large ribosomal subunit protein eL42 (106 aa).

This sequence belongs to the eukaryotic ribosomal protein eL42 family.

This is Large ribosomal subunit protein eL42 (RPL44) from Schwanniomyces occidentalis (Yeast).